A 252-amino-acid polypeptide reads, in one-letter code: 5'-nucleotidase SurE (252 aa).

The a divalent metal cation site is built by D8, D9, S39, and N91.

It belongs to the SurE nucleotidase family. Requires a divalent metal cation as cofactor.

The protein localises to the cytoplasm. The catalysed reaction is a ribonucleoside 5'-phosphate + H2O = a ribonucleoside + phosphate. Its function is as follows. Nucleotidase that shows phosphatase activity on nucleoside 5'-monophosphates. This chain is 5'-nucleotidase SurE, found in Bordetella avium (strain 197N).